The following is a 430-amino-acid chain: Vitamin B6 salvage pathway transcriptional repressor PtsJ (430 aa).

The HTH gntR-type domain occupies 4–72 (GKTANEIFDS…GRNGTVIKGS (69 aa)). Positions 32–51 (VRELASELKVNRNTVAAAYK) form a DNA-binding region, H-T-H motif. The tract at residues 70–95 (KGSPSPVALEGGDPHTPLHDLSGGNP) is disordered. At Lys-282 the chain carries N6-(pyridoxal phosphate)lysine.

This sequence in the C-terminal section; belongs to the class-I pyridoxal-phosphate-dependent aminotransferase family. As to quaternary structure, homodimer in both apo- and holo-forms.

Functionally, acts as a transcriptional repressor of the pdxK gene, encoding a pyridoxal kinase involved in the vitamin B6 salvage pathway. Also represses transcription of its own gene. Binds to the ptsJ-pdxK intergenic region, but does not bind pdxY and pdxH promoters. Among all six B6 vitamers, only pyridoxal 5'-phosphate (PLP) clearly binds to the protein and acts as an effector molecule for PtsJ, inducing a protein conformational change that increases affinity for DNA. Thus, PLP stabilizes protein-DNA interactions, reinforcing repression. This Salmonella typhimurium (strain LT2 / SGSC1412 / ATCC 700720) protein is Vitamin B6 salvage pathway transcriptional repressor PtsJ.